The following is a 300-amino-acid chain: 1D-myo-inositol 2-acetamido-2-deoxy-alpha-D-glucopyranoside deacetylase (300 aa).

3 residues coordinate Zn(2+): histidine 13, aspartate 16, and histidine 147.

The protein belongs to the MshB deacetylase family. Requires Zn(2+) as cofactor.

The catalysed reaction is 1D-myo-inositol 2-acetamido-2-deoxy-alpha-D-glucopyranoside + H2O = 1D-myo-inositol 2-amino-2-deoxy-alpha-D-glucopyranoside + acetate. Its function is as follows. Catalyzes the deacetylation of 1D-myo-inositol 2-acetamido-2-deoxy-alpha-D-glucopyranoside (GlcNAc-Ins) in the mycothiol biosynthesis pathway. This is 1D-myo-inositol 2-acetamido-2-deoxy-alpha-D-glucopyranoside deacetylase from Mycobacterium avium (strain 104).